A 163-amino-acid polypeptide reads, in one-letter code: Outer membrane protein assembly factor BamE (163 aa).

An N-terminal signal peptide occupies residues 1-22 (MINKKQSLTLLSAIALSVSLSA). Residue Cys23 is the site of N-palmitoyl cysteine attachment. Cys23 carries S-diacylglycerol cysteine lipidation. A disordered region spans residues 122 to 163 (EQSKLPMVNTTESAPQVPAQRPDEKPLVKENQTEAQVQKPIK). Positions 142–153 (RPDEKPLVKENQ) are enriched in basic and acidic residues.

This sequence belongs to the BamE family. As to quaternary structure, part of the Bam complex.

The protein resides in the cell outer membrane. Functionally, part of the outer membrane protein assembly complex, which is involved in assembly and insertion of beta-barrel proteins into the outer membrane. The sequence is that of Outer membrane protein assembly factor BamE from Shewanella oneidensis (strain ATCC 700550 / JCM 31522 / CIP 106686 / LMG 19005 / NCIMB 14063 / MR-1).